Reading from the N-terminus, the 445-residue chain is Sensor protein kinase CarS (445 aa).

The N-terminal stretch at 1-24 (MRSIQRRLSVGLFAVLLVVGLVLA) is a signal peptide. Residues 150 to 170 (FARVQWMGLGAGALALLLVLL) form a helical membrane-spanning segment. The HAMP domain occupies 177–228 (RRSLRPLEEVRLQIAQLQQGQRSQLDNQAPEELEPLVEQINHLLAHTEETLK). A Histidine kinase domain is found at 236-438 (NLGHALKTPL…RVSVELPLQK (203 aa)). His-239 bears the Phosphohistidine; by autocatalysis mark.

Its subcellular location is the membrane. It catalyses the reaction ATP + protein L-histidine = ADP + protein N-phospho-L-histidine.. Functionally, member of the two-component regulatory system CarS/CarR that regulates the expression of multiple genes involved in calcium signaling and homeostasis including CarO and CarP. May function as a membrane-associated protein kinase that phosphorylates CarR in response to environmental signals leading to activation of specific gene promoters. The chain is Sensor protein kinase CarS (carS) from Pseudomonas aeruginosa (strain ATCC 15692 / DSM 22644 / CIP 104116 / JCM 14847 / LMG 12228 / 1C / PRS 101 / PAO1).